Here is a 221-residue protein sequence, read N- to C-terminus: Glutathione peroxidase 6 (221 aa).

The signal sequence occupies residues 1–19 (MFQQFQASCLVLFFLVGFA). Residue Sec-73 is part of the active site. A non-standard amino acid (selenocysteine) is located at residue Sec-73.

It belongs to the glutathione peroxidase family. In terms of tissue distribution, expressed in olfactory epithelium and embryos.

The protein resides in the secreted. It catalyses the reaction 2 glutathione + H2O2 = glutathione disulfide + 2 H2O. The chain is Glutathione peroxidase 6 (GPX6) from Homo sapiens (Human).